A 309-amino-acid chain; its full sequence is Thioesterase lcsJ (309 aa).

A helical membrane pass occupies residues 11-31 (IAQVHGFVFSWWGVILLLAII). The segment at 61–83 (ASPTAENAQRRVPKTPKTGATDT) is disordered. N-linked (GlcNAc...) asparagine glycosylation occurs at asparagine 112. Positions 239-275 (SGWIPPRPESTGNSKSLDSLQANGHGATENGKHDAKD) are disordered. Positions 248-260 (STGNSKSLDSLQA) are enriched in polar residues.

The protein belongs to the lcsJ thioesterase family.

The protein localises to the membrane. Its pathway is secondary metabolite biosynthesis. Functionally, thioesterase; part of the gene cluster that mediates the biosynthesis of the lipopeptide antibiotics leucinostatins that show extensive biological activities, including antimalarial, antiviral, antibacterial, antifungal, and antitumor activities, as well as phytotoxic. Leucinostatin A contains nine amino acid residues, including the unusual amino acid 4-methyl-L-proline (MePro), 2-amino-6-hydroxy-4-methyl-8-oxodecanoic acid (AHyMeOA), 3-hydroxyleucine (HyLeu), alpha-aminoisobutyric acid (AIB), beta-Ala, a 4-methylhex-2-enoic acid at the N-terminus as well as a N1,N1-dimethylpropane-1,2-diamine (DPD) at the C-terminus. The biosynthesis of leucinostatins is probably initiated with the assembly of 4-methylhex-2-enoic acid by a reducing PKS. Two reducing polyketide synthases, lcsB and lcsC, have been identified in the cluster and it is not clear which is the one that assembles 4-methylhex-2-enoic acid since both contain KS, AT, DH, cMT, ER, KR and ACP domains. The polyketide residue might be transferred to the NRPS lcsA, mediated by two additional enzymes, the acyl-CoA ligase lcsD and the thioesterase lcsE. The linear polyketide carboxylic acid, which is released from PKS, is converted to a CoA thioester by lcsD, and then lcsE hydrolyzes the thiol bond and shuttles the polyketide intermediate to lcsA. The C domain of the first module catalyzed the condensation of 4-methylhex-2-enoic acid and MePro carried by domain A1, followed by successive condensations of nine amino acids to trigger the elongation of the linear peptide. A5 and A6 domains of lcsA are proposed to incorporate leucine, A2 AHyMeOA, and A3 incorporates HyLeu. A4, A7 and A8 incorporate AIB. The AHyMeOA in leucinostatin A activated by the A2 might be produced by the second PKS (lcsB or lcsC) present within the cluster. The MePro is probably produced via leucine cyclization and may originate from a separate pathway, independent of the cluster. Another nonproteinogenic amino acid, beta-Ala, could be produced by an aspartic acid decarboxylase also localized outside of the cluster. Two candidates are VFPBJ_01400 and VFPBJ_10476. The final peptide scaffold may be released by the NAD(P)H-dependent thioester reductase (TE) at the C-terminal region of lcsA. Transamination of the lcsA product by the transaminase lcsP may produce DPD at the C-terminus. Further hydroxylation steps performed alternatively by the cytochrome P450 monooxygenases lcsI, lcsK and lcsN then yield the non-methylated leucinostatins precursor. It is also possible that leucines can be hydroxylated prior to their incorporation into the peptide. Varying extents of methylation then lead to the formation of leucinostatins A and B. The polypeptide is Thioesterase lcsJ (Purpureocillium lilacinum (Paecilomyces lilacinus)).